Here is a 643-residue protein sequence, read N- to C-terminus: Manganese lipoxygenase (643 aa).

The Lipoxygenase domain occupies 166–643; the sequence is WYTDEVFAQQ…PEQLANAIVI (478 aa). Mn(2+) contacts are provided by H325, H330, H510, N514, and I643.

It belongs to the lipoxygenase family. The cofactor is Mn(2+).

It carries out the reaction (9Z,12Z)-octadecadienoate + O2 = (13S)-hydroperoxy-(9Z,11E)-octadecadienoate. Its function is as follows. Lipoxygenase that metabolizes linoleic and alpha-linolenic acids to 13S-hydroperoxy fatty acids. This chain is Manganese lipoxygenase, found in Pleurotus sapidus (Oyster mushroom).